A 57-amino-acid chain; its full sequence is Major exported protein (57 aa).

It belongs to the hcp1 family. In terms of assembly, homodimer.

The protein resides in the secreted. This chain is Major exported protein, found in Pseudomonas syringae pv. ribicola.